A 465-amino-acid polypeptide reads, in one-letter code: Adenosylhomocysteinase (465 aa).

Residues threonine 56, aspartate 131, and glutamate 191 each coordinate substrate. An NAD(+)-binding site is contributed by 192-194 (TTT). Positions 221 and 225 each coordinate substrate. NAD(+) contacts are provided by residues asparagine 226, 255 to 260 (GYGDVG), glutamate 278, asparagine 313, 334 to 336 (IGH), and asparagine 379.

The protein belongs to the adenosylhomocysteinase family. The cofactor is NAD(+).

It is found in the cytoplasm. It carries out the reaction S-adenosyl-L-homocysteine + H2O = L-homocysteine + adenosine. It participates in amino-acid biosynthesis; L-homocysteine biosynthesis; L-homocysteine from S-adenosyl-L-homocysteine: step 1/1. May play a key role in the regulation of the intracellular concentration of adenosylhomocysteine. This Bartonella tribocorum (strain CIP 105476 / IBS 506) protein is Adenosylhomocysteinase.